A 308-amino-acid polypeptide reads, in one-letter code: Glycosyltransferase 6 domain-containing protein 1 (308 aa).

The Cytoplasmic segment spans residues 1–6 (MNSKRM). The helical; Signal-anchor for type II membrane protein transmembrane segment at 7-23 (LLLVLFAFSLMLVERYF) threads the bilayer. The Lumenal segment spans residues 24–308 (RNHQVEELRL…KVAHDSHRKL (285 aa)). N-linked (GlcNAc...) asparagine glycosylation occurs at Asn-74. Substrate-binding positions include 82–87 (FATGRF), 173–175 (AVN), and 195–198 (HAWW). The Nucleophile role is filled by Glu-263.

This sequence belongs to the glycosyltransferase 6 family. It depends on Mn(2+) as a cofactor.

The protein localises to the membrane. In Macaca fascicularis (Crab-eating macaque), this protein is Glycosyltransferase 6 domain-containing protein 1 (GLT6D1).